A 599-amino-acid polypeptide reads, in one-letter code: THO complex subunit 1 (599 aa).

Disordered regions lie at residues 376-395 (EKQPIDKKSPNAGQKKRRQR) and 497-599 (KYQA…MPVS). Positions 502–522 (PNEKAKRAKKEETKGGSHETE) are enriched in basic and acidic residues. Positions 575 to 585 (QIEDGETEEAG) are enriched in acidic residues.

Component of the THO complex, which is composed of THO1, THO2, THO3, THO5, THO6 and THO7.

The protein resides in the nucleus. Its function is as follows. Acts as a component of the THO subcomplex of the TREX complex which is thought to couple mRNA transcription, processing and nuclear export. Contributes to the integrity of the endogenous trans-acting small interfering RNA (ta-siRNA) pathway. May process or transport a long RNA molecule so that it can be a template for secondary siRNA production. May participate in the trafficking of siRNA precursors to the ARGONAUTE catalytic center. Required for the generation of functional messenger ribonucleoproteins (mRNPs). Plays an important roles in plant innate immunity. The protein is THO complex subunit 1 (THO1) of Arabidopsis thaliana (Mouse-ear cress).